We begin with the raw amino-acid sequence, 352 residues long: uncharacterized protein (352 aa).

The N-terminal 55 residues, M1–S55, are a transit peptide targeting the chloroplast.

The protein belongs to the methyltransferase superfamily.

The protein resides in the plastid. It is found in the chloroplast. It localises to the plastoglobule. This is an uncharacterized protein from Arabidopsis thaliana (Mouse-ear cress).